The chain runs to 235 residues: Orotidine 5'-phosphate decarboxylase (235 aa).

Residues Asp10, Lys33, 60-69 (DLKMNDIPNT), Thr123, Arg185, Gln194, Gly214, and Arg215 each bind substrate. The active-site Proton donor is the Lys62.

Belongs to the OMP decarboxylase family. Type 1 subfamily. In terms of assembly, homodimer.

The catalysed reaction is orotidine 5'-phosphate + H(+) = UMP + CO2. Its pathway is pyrimidine metabolism; UMP biosynthesis via de novo pathway; UMP from orotate: step 2/2. Functionally, catalyzes the decarboxylation of orotidine 5'-monophosphate (OMP) to uridine 5'-monophosphate (UMP). The sequence is that of Orotidine 5'-phosphate decarboxylase from Lactobacillus johnsonii (strain CNCM I-12250 / La1 / NCC 533).